Here is a 368-residue protein sequence, read N- to C-terminus: Homoserine O-acetyltransferase (368 aa).

The region spanning 43–346 (ILLEHALTGT…EYGHDAFLVE (304 aa)) is the AB hydrolase-1 domain. The active-site Nucleophile is the serine 145. Arginine 212 lines the substrate pocket. Active-site residues include aspartate 307 and histidine 340. A substrate-binding site is contributed by aspartate 341.

This sequence belongs to the AB hydrolase superfamily. MetX family. As to quaternary structure, homodimer.

The protein localises to the cytoplasm. It catalyses the reaction L-homoserine + acetyl-CoA = O-acetyl-L-homoserine + CoA. It functions in the pathway amino-acid biosynthesis; L-methionine biosynthesis via de novo pathway; O-acetyl-L-homoserine from L-homoserine: step 1/1. Its function is as follows. Transfers an acetyl group from acetyl-CoA to L-homoserine, forming acetyl-L-homoserine. This chain is Homoserine O-acetyltransferase, found in Listeria monocytogenes serovar 1/2a (strain ATCC BAA-679 / EGD-e).